The following is a 204-amino-acid chain: Shikimate kinase (204 aa).

Position 35-40 (35-40 (ASGKST)) interacts with ATP. Ser-39 is a binding site for Mg(2+). Substrate contacts are provided by Asp-57, Arg-81, and Gly-103. Residue Arg-142 participates in ATP binding. A substrate-binding site is contributed by Arg-169.

It belongs to the shikimate kinase family. As to quaternary structure, monomer. Mg(2+) is required as a cofactor.

It is found in the cytoplasm. It carries out the reaction shikimate + ATP = 3-phosphoshikimate + ADP + H(+). Its pathway is metabolic intermediate biosynthesis; chorismate biosynthesis; chorismate from D-erythrose 4-phosphate and phosphoenolpyruvate: step 5/7. Functionally, catalyzes the specific phosphorylation of the 3-hydroxyl group of shikimic acid using ATP as a cosubstrate. This chain is Shikimate kinase, found in Salinibacter ruber (strain DSM 13855 / M31).